Consider the following 297-residue polypeptide: Formylmethanofuran--tetrahydromethanopterin formyltransferase (297 aa).

This sequence belongs to the FTR family. As to quaternary structure, homotetramer.

The protein localises to the cytoplasm. It catalyses the reaction N-formylmethanofuran + 5,6,7,8-tetrahydromethanopterin + H(+) = N(5)-formyl-5,6,7,8-tetrahydromethanopterin + methanofuran. It functions in the pathway one-carbon metabolism; methanogenesis from CO(2); 5,10-methenyl-5,6,7,8-tetrahydromethanopterin from CO(2): step 2/3. Catalyzes the reversible transfer of a formyl group from formylmethanofuran (formyl-MFR) to tetrahydromethanopterin (H(4)MPT) to produce 5-formyl tetrahydromethanopterin (5-formyl-H(4)MPT) and methanofuran (MFR). This Methanosarcina barkeri (strain Fusaro / DSM 804) protein is Formylmethanofuran--tetrahydromethanopterin formyltransferase.